The sequence spans 436 residues: Cyclic nucleotide-binding domain-containing protein 1 (436 aa).

Residues 89 to 105 (EQRELNEGKEESQHQQP) are compositionally biased toward basic and acidic residues. The segment at 89-108 (EQRELNEGKEESQHQQPDDS) is disordered. 322 to 436 (YYEEWPTLSI…IIEDKDLFVA (115 aa)) contacts a nucleoside 3',5'-cyclic phosphate.

This chain is Cyclic nucleotide-binding domain-containing protein 1 (CNBD1), found in Homo sapiens (Human).